A 190-amino-acid chain; its full sequence is Dynein axonemal light chain 1 (190 aa).

A2 is subject to N-acetylalanine. LRR repeat units follow at residues 47–69, 70–93, 95–114, and 115–138; these read LANCEKLSLSTNCIEKIANLNGL, KNLRILSLGRNNIKNLNGLEAVGD, LEELWISYNFIEKLKGIHVM, and RKLKILYISNNLVKDWAEFVKLAE. S56 carries the post-translational modification Phosphoserine.

Belongs to the dynein light chain LC1-type family. In terms of assembly, interacts with ZMYND10 (via C-terminus). Interacts with DNAH5, a outer arm dynein heavy chain. Interacts with tubulin located within the A-tubule of the outer doublets in a ATP-independent manner.

Its subcellular location is the cytoplasm. It is found in the cytoskeleton. It localises to the cilium axoneme. Its function is as follows. Part of the multisubunit axonemal ATPase complexes that generate the force for cilia motility and govern beat frequency. Component of the outer arm dynein (ODA). May be involved in a mechanosensory feedback mechanism controlling ODA activity based on external conformational cues by tethering the outer arm dynein heavy chain (DNAH5) to the microtubule within the axoneme. Important for ciliary function in the airways and for the function of the cilia that produce the nodal flow essential for the determination of the left-right asymmetry. The protein is Dynein axonemal light chain 1 of Rattus norvegicus (Rat).